Here is a 172-residue protein sequence, read N- to C-terminus: MFYHISLEHEILLHPRYFGPNLLNTVKQKLFTEVEGTCTGKYGFVIAVTTIDNIGAGVIQPGRGFVLYPVKYKAIVFRPFKGEVVDAVVTQVNKVGLFTEIGPMSCFISRHSIPSEMEFDPNSNPPCYKTVDEDVVIQQDDEIRLKIVGTRVDKNDIFAIGSLMDDYLGLVS.

It belongs to the eukaryotic RPB7/RPC8 RNA polymerase subunit family. In terms of assembly, component of the RNA polymerase II (Pol II) complex consisting of 12 subunits. RPB4 and RPB7 form a subcomplex that protrudes from the 10-subunit Pol II core complex.

The protein localises to the nucleus. In terms of biological role, DNA-dependent RNA polymerase catalyzes the transcription of DNA into RNA using the four ribonucleoside triphosphates as substrates. Component of RNA polymerase II which synthesizes mRNA precursors and many functional non-coding RNAs. Pol II is the central component of the basal RNA polymerase II transcription machinery. It is composed of mobile elements that move relative to each other. RPB7 is part of a subcomplex with RPB4 that binds to a pocket formed by RPB1, RPB2 and RPB6 at the base of the clamp element. The RPB4-RPB7 subcomplex seems to lock the clamp via RPB7 in the closed conformation thus preventing double-stranded DNA to enter the active site cleft. The RPB4-RPB7 subcomplex binds single-stranded DNA and RNA. This chain is DNA-directed RNA polymerase II subunit RPB7 (polr2g), found in Danio rerio (Zebrafish).